The sequence spans 774 residues: Phosphoribosylformylglycinamidine synthase subunit PurL (774 aa).

The active site involves histidine 51. Tyrosine 54 and lysine 93 together coordinate ATP. Glutamate 95 contacts Mg(2+). Substrate-binding positions include 96-99 and arginine 118; that span reads SHNH. The active-site Proton acceptor is the histidine 97. A Mg(2+)-binding site is contributed by aspartate 119. A substrate-binding site is contributed by glutamine 242. Position 270 (aspartate 270) interacts with Mg(2+). Position 314–316 (314–316) interacts with substrate; that stretch reads ESQ. ATP-binding residues include aspartate 514 and glycine 551. Position 552 (asparagine 552) interacts with Mg(2+). Serine 554 lines the substrate pocket.

It belongs to the FGAMS family. As to quaternary structure, monomer. Part of the FGAM synthase complex composed of 1 PurL, 1 PurQ and 2 PurS subunits.

Its subcellular location is the cytoplasm. It carries out the reaction N(2)-formyl-N(1)-(5-phospho-beta-D-ribosyl)glycinamide + L-glutamine + ATP + H2O = 2-formamido-N(1)-(5-O-phospho-beta-D-ribosyl)acetamidine + L-glutamate + ADP + phosphate + H(+). Its pathway is purine metabolism; IMP biosynthesis via de novo pathway; 5-amino-1-(5-phospho-D-ribosyl)imidazole from N(2)-formyl-N(1)-(5-phospho-D-ribosyl)glycinamide: step 1/2. Part of the phosphoribosylformylglycinamidine synthase complex involved in the purines biosynthetic pathway. Catalyzes the ATP-dependent conversion of formylglycinamide ribonucleotide (FGAR) and glutamine to yield formylglycinamidine ribonucleotide (FGAM) and glutamate. The FGAM synthase complex is composed of three subunits. PurQ produces an ammonia molecule by converting glutamine to glutamate. PurL transfers the ammonia molecule to FGAR to form FGAM in an ATP-dependent manner. PurS interacts with PurQ and PurL and is thought to assist in the transfer of the ammonia molecule from PurQ to PurL. The sequence is that of Phosphoribosylformylglycinamidine synthase subunit PurL from Gloeobacter violaceus (strain ATCC 29082 / PCC 7421).